The primary structure comprises 545 residues: MTAKDILFDAEARTKLKVGVDKLANAVKVTLGPAGRNVLIDKKFGAPTSTKDGVTVAKEIELVDPVENMGAQMVREVASKTSDVAGDGTTTATVLAQAIYREGLKNVTAGARPIDLKRGIDRAVKEVVAELRNISRSISGKKEIAQVGTISANNDPEIGELIAEAMDKVGKDGVITVEEAKGMETELKVVEGMQFDRGYLSPYFVTNSETMEAELDEALILIHDKKISNMKELLPILEKAAQSGRPLLIIAEDIEGEALATLVVNKLRGTLKVAAVKAPGFGDRRKAMLEDIAILTGGTVISEEKGYKLENATMAYLGQAARITIDKDNTTIVEGKGKQEEIKARINEIKGQIEKSTSDYDTEKLQERLAKLSGGVAVLKIGASTEVEMKEKKARVEDALHATRAAVQEGIVVGGGVALIRAAKGLAKAVADNEDQKTGIEIIRRALEEPLRQIVANTGTTDGAVVLEKVKNAEGDYGFNARTEQYENLIEAGVVDPTKVTRSALENAASVASILLTTEAAITDVKEDKADMPAMPPGGMGGGMY.

ATP is bound by residues 30–33 (TLGP), Lys51, 87–91 (DGTTT), Gly415, and Asp496.

It belongs to the chaperonin (HSP60) family. As to quaternary structure, forms a cylinder of 14 subunits composed of two heptameric rings stacked back-to-back. Interacts with the co-chaperonin GroES.

It is found in the cytoplasm. It catalyses the reaction ATP + H2O + a folded polypeptide = ADP + phosphate + an unfolded polypeptide.. In terms of biological role, together with its co-chaperonin GroES, plays an essential role in assisting protein folding. The GroEL-GroES system forms a nano-cage that allows encapsulation of the non-native substrate proteins and provides a physical environment optimized to promote and accelerate protein folding. This Chlorobaculum tepidum (strain ATCC 49652 / DSM 12025 / NBRC 103806 / TLS) (Chlorobium tepidum) protein is Chaperonin GroEL.